The primary structure comprises 231 residues: Ribonuclease 3 (231 aa).

Residues M1–G134 form the RNase III domain. E47 lines the Mg(2+) pocket. D51 is a catalytic residue. Residues D120 and E123 each contribute to the Mg(2+) site. E123 is a catalytic residue. In terms of domain architecture, DRBM spans D160–R229.

The protein belongs to the ribonuclease III family. In terms of assembly, homodimer. It depends on Mg(2+) as a cofactor.

The protein localises to the cytoplasm. It catalyses the reaction Endonucleolytic cleavage to 5'-phosphomonoester.. In terms of biological role, digests double-stranded RNA. Involved in the processing of primary rRNA transcript to yield the immediate precursors to the large and small rRNAs (23S and 16S). Also processes some mRNAs, and tRNAs when they are encoded in the rRNA operon. Its function is as follows. CRISPR (clustered regularly interspaced short palindromic repeat) is an adaptive immune system that provides protection against mobile genetic elements (viruses, transposable elements and conjugative plasmids). CRISPR clusters contain spacers, sequences complementary to antecedent mobile elements, and target invading nucleic acids. CRISPR clusters are transcribed and processed into CRISPR RNA (crRNA). In this organism endogenous ribonuclease 3 and Cas9 are required for correct coprocessing of pre-crRNA and the trans-encoded small RNA (tracrRNA). Cas9, crRNA and tracrRNA are required for cleavage of invading DNA. Complements pre-crRNA and tracrRNA coprocessing defects in an rnc deletion in S.pyogenes strain 370. In Streptococcus mutans serotype c (strain ATCC 700610 / UA159), this protein is Ribonuclease 3.